The chain runs to 190 residues: Large ribosomal subunit protein uL6 (190 aa).

The protein belongs to the universal ribosomal protein uL6 family.

This chain is Large ribosomal subunit protein uL6 (RpL9), found in Drosophila melanogaster (Fruit fly).